A 222-amino-acid chain; its full sequence is Sugar fermentation stimulation protein homolog (222 aa).

This sequence belongs to the SfsA family.

This is Sugar fermentation stimulation protein homolog from Thermotoga maritima (strain ATCC 43589 / DSM 3109 / JCM 10099 / NBRC 100826 / MSB8).